We begin with the raw amino-acid sequence, 872 residues long: Alanine--tRNA ligase (872 aa).

Residues His-567, His-571, Cys-669, and His-673 each coordinate Zn(2+).

It belongs to the class-II aminoacyl-tRNA synthetase family. Zn(2+) is required as a cofactor.

It localises to the cytoplasm. It carries out the reaction tRNA(Ala) + L-alanine + ATP = L-alanyl-tRNA(Ala) + AMP + diphosphate. Catalyzes the attachment of alanine to tRNA(Ala) in a two-step reaction: alanine is first activated by ATP to form Ala-AMP and then transferred to the acceptor end of tRNA(Ala). Also edits incorrectly charged Ser-tRNA(Ala) and Gly-tRNA(Ala) via its editing domain. In Streptococcus pyogenes serotype M28 (strain MGAS6180), this protein is Alanine--tRNA ligase.